A 531-amino-acid polypeptide reads, in one-letter code: Galactose/methyl galactoside import permease protein MglC (531 aa).

Helical transmembrane passes span 193-213 (FFLA…CIVV), 239-259 (MFYA…LSIG), 267-287 (VVTG…GLGP), 300-320 (VMSL…AGFF), 326-346 (IHPF…LFFG), 376-396 (LVTF…AWFI), 424-444 (FGVT…GAFF), 461-481 (LDAI…IGKL), 483-503 (GAVV…FLGI), and 505-525 (TNLQ…LDSV).

It belongs to the binding-protein-dependent transport system permease family. AraH/RbsC subfamily. In terms of assembly, the complex is composed of one ATP-binding protein (MglA), two transmembrane proteins (MglC) and a solute-binding protein (MglB).

It is found in the cell membrane. Functionally, part of the ABC transporter complex MglABC involved in galactose/methyl galactoside import. Probably responsible for the translocation of the substrate across the membrane. This chain is Galactose/methyl galactoside import permease protein MglC (mglC), found in Treponema pallidum (strain Nichols).